The chain runs to 222 residues: dTTP/UTP pyrophosphatase (222 aa).

Aspartate 83 serves as the catalytic Proton acceptor.

Belongs to the Maf family. YhdE subfamily. The cofactor is a divalent metal cation.

It localises to the cytoplasm. It carries out the reaction dTTP + H2O = dTMP + diphosphate + H(+). The enzyme catalyses UTP + H2O = UMP + diphosphate + H(+). In terms of biological role, nucleoside triphosphate pyrophosphatase that hydrolyzes dTTP and UTP. May have a dual role in cell division arrest and in preventing the incorporation of modified nucleotides into cellular nucleic acids. The polypeptide is dTTP/UTP pyrophosphatase (Desulfitobacterium hafniense (strain Y51)).